We begin with the raw amino-acid sequence, 602 residues long: ATP-dependent DNA helicase XPD (602 aa).

The Helicase ATP-binding domain maps to 1–247 (MQKSYGVALE…DLIEMIRSAL (247 aa)). Residue 11–18 (SPTGSGKT) coordinates ATP. [4Fe-4S] cluster-binding residues include Cys74, Cys95, Cys110, and Cys146. Residues 193–196 (DEAH) carry the DEAH box motif. One can recognise a Helicase C-terminal domain in the interval 421–602 (VIEDIILKVK…SAQAREKYGA (182 aa)). Residues Trp531 and Arg566 each coordinate ssDNA.

The protein belongs to the helicase family. RAD3/XPD subfamily. As to quaternary structure, monomer. [4Fe-4S] cluster serves as cofactor.

It carries out the reaction Couples ATP hydrolysis with the unwinding of duplex DNA at the replication fork by translocating in the 5'-3' direction. This creates two antiparallel DNA single strands (ssDNA). The leading ssDNA polymer is the template for DNA polymerase III holoenzyme which synthesizes a continuous strand.. It catalyses the reaction ATP + H2O = ADP + phosphate + H(+). In terms of biological role, ATP-dependent 5'-3' DNA helicase. Thought to be involved in nucleotide excision repair (NER) of DNA. The sequence is that of ATP-dependent DNA helicase XPD from Thermoplasma acidophilum (strain ATCC 25905 / DSM 1728 / JCM 9062 / NBRC 15155 / AMRC-C165).